The following is a 393-amino-acid chain: MIKKEAPLIALVAGEISGDILGAGLINALKLHYPNARFIGVAGPRMIQAGCETLFDMEELAVMGLAEVVKHLPRLLKRRKQVIETMLAEKPDIFIGIDAPDFNLTVEEKLKASGIKTIHYVSPSVWAWRQNRVQKIARATNLVLAFLPFEKAFYDRFNVPCRFIGHTMADAIALKPNRSEACATLNLDETQRYLAILVGSRASEVRFLAEPFLKAAKILKQQYPDLQFLVPLVNDKRIAQFEQIKAQVAPELSVHILKGNARQAMIAAEASLLASGTAALEGMLCKSPMVVGYKMKAMTYWLAKRLVKTKYISLPNLLADEMLVPELIQDECNPENLAWYLGNYLADDADHRKQRNELKQRFTELHKLIQCDADAQAAQAVVDVLEANTSDQN.

This sequence belongs to the LpxB family.

It carries out the reaction a lipid X + a UDP-2-N,3-O-bis[(3R)-3-hydroxyacyl]-alpha-D-glucosamine = a lipid A disaccharide + UDP + H(+). It participates in bacterial outer membrane biogenesis; LPS lipid A biosynthesis. Functionally, condensation of UDP-2,3-diacylglucosamine and 2,3-diacylglucosamine-1-phosphate to form lipid A disaccharide, a precursor of lipid A, a phosphorylated glycolipid that anchors the lipopolysaccharide to the outer membrane of the cell. The sequence is that of Lipid-A-disaccharide synthase from Actinobacillus pleuropneumoniae serotype 7 (strain AP76).